A 351-amino-acid polypeptide reads, in one-letter code: SLAM family member 6 (351 aa).

Residues 1–30 (MAVSRAPAPDSACQRMVWLFPLVFCLGSGS) form the signal peptide. Residues 31 to 239 (EVSQSSSDPQ…KGVLTNPPWN (209 aa)) are Extracellular-facing. The 95-residue stretch at 36-130 (SSDPQLMNGV…YTAQITTKDS (95 aa)) folds into the Ig-like V-type domain. 9 N-linked (GlcNAc...) asparagine glycosylation sites follow: Asn82, Asn101, Asn112, Asn152, Asn159, Asn172, Asn186, Asn193, and Asn218. In terms of domain architecture, Ig-like C2-type spans 147–210 (NLETTNYTLL…RNSGDQTYVC (64 aa)). 2 disulfide bridges follow: Cys162-Cys229 and Cys168-Cys210. Residues 240–262 (AVWFMTTISIISAVILIFVCWSI) form a helical membrane-spanning segment. Residues 263–351 (HVWKRRGSLP…KVNTLINYNS (89 aa)) lie on the Cytoplasmic side of the membrane. The segment at 272 to 295 (PLTSQHPESSQSTDGPGSPGNTVY) is disordered. 2 consecutive short sequence motifs (ITSM) follow at residues 293–298 (TVYAQV) and 317–322 (TIYSIV). Tyr319 bears the Phosphotyrosine mark.

Homodimer. Interacts with PTN6 and, upon phosphorylation, with PTN11 and SH2D1A/SAP. Phosphorylated. Expressed on hematopoietic cells. Isoform 3 is expressed in thymocytes and B lymphocytes of C57Bl/6 strain.

The protein localises to the cell membrane. Self-ligand receptor of the signaling lymphocytic activation molecule (SLAM) family. SLAM receptors triggered by homo- or heterotypic cell-cell interactions are modulating the activation and differentiation of a wide variety of immune cells and thus are involved in the regulation and interconnection of both innate and adaptive immune response. Activities are controlled by presence or absence of small cytoplasmic adapter proteins, SH2D1A/SAP and/or SH2D1B/EAT-2. Triggers cytolytic activity only in natural killer cells (NK) expressing high surface densities of natural cytotoxicity receptors. Positive signaling in NK cells implicates phosphorylation of VAV1. NK cell activation seems to depend on SH2D1B and not on SH2D1A. In conjunction with SLAMF1 controls the transition between positive selection and the subsequent expansion and differentiation of the thymocytic natural killer T (NKT) cell lineage. Promotes T cell differentiation into a helper T-cell Th17 phenotype leading to increased IL-17 secretion; the costimulatory activity requires SH2D1A. Promotes recruitment of RORC to the IL-17 promoter. In conjunction with SLAMF1 and CD84/SLAMF5 may be a negative regulator of the humoral immune response. In the absence of SH2D1A/SAP can transmit negative signals to CD4(+) T-cells and NKT cells. Negatively regulates germinal center formation by inhibiting T-cell:B-cell adhesion; the function probably implicates increased association with PTPN6/SHP-1 via ITSMs in absence of SH2D1A/SAP. However, reported to mediated T-cell adhesion, to participate in stable T-cell:B-cell interactions and to be involved in maintaining B-cell tolerance in germinal centers and in preventing autoimmunity. Involved in regulation of autoimmunity. Isoform 3 may be suppressor of pathogenic T-cell proliferation. This chain is SLAM family member 6 (Slamf6), found in Mus musculus (Mouse).